The primary structure comprises 101 residues: Small ribosomal subunit protein uS14 (101 aa).

A disordered region spans residues 1 to 25 (MAKVSAIQKNKSRQKKSQRLHNKRS). Residues 10–25 (NKSRQKKSQRLHNKRS) show a composition bias toward basic residues.

The protein belongs to the universal ribosomal protein uS14 family. As to quaternary structure, part of the 30S ribosomal subunit. Contacts proteins S3 and S10.

Binds 16S rRNA, required for the assembly of 30S particles and may also be responsible for determining the conformation of the 16S rRNA at the A site. This is Small ribosomal subunit protein uS14 from Rickettsia typhi (strain ATCC VR-144 / Wilmington).